Consider the following 450-residue polypeptide: Signal recognition particle protein (450 aa).

Residues G107–T114, D190–R194, and T248–D251 each bind GTP.

It belongs to the GTP-binding SRP family. SRP54 subfamily. Part of the signal recognition particle protein translocation system, which is composed of SRP and FtsY. SRP is a ribonucleoprotein composed of Ffh and a 4.5S RNA molecule.

It is found in the cytoplasm. The enzyme catalyses GTP + H2O = GDP + phosphate + H(+). In terms of biological role, involved in targeting and insertion of nascent membrane proteins into the cytoplasmic membrane. Binds to the hydrophobic signal sequence of the ribosome-nascent chain (RNC) as it emerges from the ribosomes. The SRP-RNC complex is then targeted to the cytoplasmic membrane where it interacts with the SRP receptor FtsY. Interaction with FtsY leads to the transfer of the RNC complex to the Sec translocase for insertion into the membrane, the hydrolysis of GTP by both Ffh and FtsY, and the dissociation of the SRP-FtsY complex into the individual components. In Buchnera aphidicola subsp. Schizaphis graminum (strain Sg), this protein is Signal recognition particle protein.